A 334-amino-acid polypeptide reads, in one-letter code: CRISPR-associated endonuclease Cas1 (334 aa).

3 residues coordinate Mn(2+): glutamate 161, histidine 226, and glutamate 241.

The protein belongs to the CRISPR-associated endonuclease Cas1 family. As to quaternary structure, homodimer, forms a heterotetramer with a Cas2 homodimer. Mg(2+) is required as a cofactor. It depends on Mn(2+) as a cofactor.

In terms of biological role, CRISPR (clustered regularly interspaced short palindromic repeat), is an adaptive immune system that provides protection against mobile genetic elements (viruses, transposable elements and conjugative plasmids). CRISPR clusters contain spacers, sequences complementary to antecedent mobile elements, and target invading nucleic acids. CRISPR clusters are transcribed and processed into CRISPR RNA (crRNA). Acts as a dsDNA endonuclease. Involved in the integration of spacer DNA into the CRISPR cassette. The polypeptide is CRISPR-associated endonuclease Cas1 (Methanothermobacter thermautotrophicus (strain ATCC 29096 / DSM 1053 / JCM 10044 / NBRC 100330 / Delta H) (Methanobacterium thermoautotrophicum)).